Reading from the N-terminus, the 471-residue chain is Acetylcholinesterase collagenic tail peptide (471 aa).

The first 30 residues, 1–30 (MLGILLQKATATLASGLNSSRAGMFPIALG), serve as a signal peptide directing secretion. A PRAD region spans residues 70–86 (CCLLTPPPPPMFPPPFF). 2 Collagen-like domains span residues 118-282 (GPPG…SGLP) and 293-307 (GPKG…VGRC). Disordered regions lie at residues 140–205 (EIGE…GEKG) and 237–267 (KGVS…IGPP). Low complexity-rich tracts occupy residues 155-164 (VRGPRGMPGS) and 242-251 (APGHRGPVGR). 2 repeat units span residues 388 to 413 (FCGD…TDSC) and 420 to 443 (YCGD…YHTC). Residues 388–443 (FCGDEIVQVENGEECDDGNRIVTDSCINCKQAYCGDGYLQSGLEECDGKDFGYHTC) are 2 X 26 AA approximate repeats.

It belongs to the COLQ family. The asymmetric form of AChE is a disulfide-bonded oligomer composed of a collagenic subunit (Q) and a variable number of asymmetric (T) catalytic subunits. The N-terminal of the collagenic subunit (Q) associates with the C-terminal of the catalytic subunit (T). In terms of tissue distribution, expressed in electric organs but not in muscle.

The protein resides in the synapse. In terms of biological role, anchors the catalytic subunits of asymmetric AChE to the synaptic basal lamina. This chain is Acetylcholinesterase collagenic tail peptide, found in Torpedo marmorata (Marbled electric ray).